The primary structure comprises 191 residues: Peptidyl-tRNA hydrolase (191 aa).

A tRNA-binding site is contributed by Tyr-17. His-22 functions as the Proton acceptor in the catalytic mechanism. The tRNA site is built by Tyr-68, Asn-70, and Asn-116.

Belongs to the PTH family. In terms of assembly, monomer.

Its subcellular location is the cytoplasm. The catalysed reaction is an N-acyl-L-alpha-aminoacyl-tRNA + H2O = an N-acyl-L-amino acid + a tRNA + H(+). Functionally, hydrolyzes ribosome-free peptidyl-tRNAs (with 1 or more amino acids incorporated), which drop off the ribosome during protein synthesis, or as a result of ribosome stalling. In terms of biological role, catalyzes the release of premature peptidyl moieties from peptidyl-tRNA molecules trapped in stalled 50S ribosomal subunits, and thus maintains levels of free tRNAs and 50S ribosomes. The polypeptide is Peptidyl-tRNA hydrolase (Mycobacterium marinum (strain ATCC BAA-535 / M)).